Consider the following 119-residue polypeptide: Large ribosomal subunit protein bL20 (119 aa).

The protein belongs to the bacterial ribosomal protein bL20 family.

In terms of biological role, binds directly to 23S ribosomal RNA and is necessary for the in vitro assembly process of the 50S ribosomal subunit. It is not involved in the protein synthesizing functions of that subunit. The protein is Large ribosomal subunit protein bL20 of Thermoanaerobacter pseudethanolicus (strain ATCC 33223 / 39E) (Clostridium thermohydrosulfuricum).